Consider the following 37-residue polypeptide: uncharacterized protein (37 aa).

The first 23 residues, 1-23, serve as a signal peptide directing secretion; it reads MLNFSLCLYPVFILNKLVLRTQS.

It belongs to the orthopoxviruses VACWR204.5 protein family.

This is an uncharacterized protein from Vaccinia virus (strain Western Reserve) (VACV).